A 124-amino-acid chain; its full sequence is Large ribosomal subunit protein bL21 (124 aa).

Residues 105–124 (NAPSIGPRVRKAKPAAEAAE) are disordered.

Belongs to the bacterial ribosomal protein bL21 family. Part of the 50S ribosomal subunit. Contacts protein L20.

This protein binds to 23S rRNA in the presence of protein L20. The polypeptide is Large ribosomal subunit protein bL21 (Rhodopseudomonas palustris (strain BisA53)).